A 605-amino-acid chain; its full sequence is Elongation factor 4 (605 aa).

Positions 4-186 (SSVRNFCIIA…AIVNKVPAPK (183 aa)) constitute a tr-type G domain. Residues 16–21 (DHGKST) and 133–136 (NKID) each bind GTP.

This sequence belongs to the TRAFAC class translation factor GTPase superfamily. Classic translation factor GTPase family. LepA subfamily.

The protein resides in the cell membrane. It catalyses the reaction GTP + H2O = GDP + phosphate + H(+). Required for accurate and efficient protein synthesis under certain stress conditions. May act as a fidelity factor of the translation reaction, by catalyzing a one-codon backward translocation of tRNAs on improperly translocated ribosomes. Back-translocation proceeds from a post-translocation (POST) complex to a pre-translocation (PRE) complex, thus giving elongation factor G a second chance to translocate the tRNAs correctly. Binds to ribosomes in a GTP-dependent manner. In Dehalococcoides mccartyi (strain ATCC BAA-2100 / JCM 16839 / KCTC 5957 / BAV1), this protein is Elongation factor 4.